Reading from the N-terminus, the 317-residue chain is Carbonic anhydrase 6 (317 aa).

An N-terminal signal peptide occupies residues 1–17; sequence MRALVSVVSLFFLGIQA. The Alpha-carbonic anhydrase domain maps to 19–277; it reads SDWSYSGDDG…NNHRVVEANF (259 aa). A disulfide bridge links Cys-41 with Cys-223. His-84 serves as the catalytic Proton donor/acceptor. Residues His-110, His-112, and His-137 each contribute to the Zn(2+) site. Substrate is bound at residue 219 to 220; the sequence is TT. The N-linked (GlcNAc...) asparagine glycan is linked to Asn-255.

Belongs to the alpha-carbonic anhydrase family. It depends on Zn(2+) as a cofactor. In terms of tissue distribution, major constituent of saliva.

The protein localises to the secreted. The catalysed reaction is hydrogencarbonate + H(+) = CO2 + H2O. Functionally, reversible hydration of carbon dioxide. Its role in saliva is unknown. This is Carbonic anhydrase 6 (Ca6) from Mus musculus (Mouse).